Reading from the N-terminus, the 842-residue chain is Elongation factor 2 (842 aa).

In terms of domain architecture, tr-type G spans 17 to 253; it reads TNVRNMSVIA…LWGDSYFNPK (237 aa). GTP-binding positions include 26–33, 158–161, and 213–215; these read AHVDHGKS, NKVD, and SGL. Position 699 is a diphthamide (His-699).

It belongs to the TRAFAC class translation factor GTPase superfamily. Classic translation factor GTPase family. EF-G/EF-2 subfamily.

It localises to the cytoplasm. The catalysed reaction is GTP + H2O = GDP + phosphate + H(+). Catalyzes the GTP-dependent ribosomal translocation step during translation elongation. During this step, the ribosome changes from the pre-translocational (PRE) to the post-translocational (POST) state as the newly formed A-site-bound peptidyl-tRNA and P-site-bound deacylated tRNA move to the P and E sites, respectively. Catalyzes the coordinated movement of the two tRNA molecules, the mRNA and conformational changes in the ribosome. The sequence is that of Elongation factor 2 (EFT1) from Kluyveromyces lactis (strain ATCC 8585 / CBS 2359 / DSM 70799 / NBRC 1267 / NRRL Y-1140 / WM37) (Yeast).